Reading from the N-terminus, the 314-residue chain is Putative glycosyltransferase ORF31 (314 aa).

The protein belongs to the glycosyltransferase group 1 family.

The sequence is that of Putative glycosyltransferase ORF31 from Haloarcula hispanica (His1V).